Here is a 521-residue protein sequence, read N- to C-terminus: Bifunctional purine biosynthesis protein PurH (521 aa).

Positions 1–150 (MSEDRKAIKR…KNHPSVAVVT (150 aa)) constitute an MGS-like domain.

The protein belongs to the PurH family.

It catalyses the reaction (6R)-10-formyltetrahydrofolate + 5-amino-1-(5-phospho-beta-D-ribosyl)imidazole-4-carboxamide = 5-formamido-1-(5-phospho-D-ribosyl)imidazole-4-carboxamide + (6S)-5,6,7,8-tetrahydrofolate. It carries out the reaction IMP + H2O = 5-formamido-1-(5-phospho-D-ribosyl)imidazole-4-carboxamide. It participates in purine metabolism; IMP biosynthesis via de novo pathway; 5-formamido-1-(5-phospho-D-ribosyl)imidazole-4-carboxamide from 5-amino-1-(5-phospho-D-ribosyl)imidazole-4-carboxamide (10-formyl THF route): step 1/1. Its pathway is purine metabolism; IMP biosynthesis via de novo pathway; IMP from 5-formamido-1-(5-phospho-D-ribosyl)imidazole-4-carboxamide: step 1/1. This is Bifunctional purine biosynthesis protein PurH from Corynebacterium efficiens (strain DSM 44549 / YS-314 / AJ 12310 / JCM 11189 / NBRC 100395).